Here is a 538-residue protein sequence, read N- to C-terminus: Protein phosphatase EYA2 (538 aa).

The segment covering 209 to 230 (HNVPNQSSESLAGEYNTHNGPS) has biased composition (polar residues). The segment at 209–263 (HNVPNQSSESLAGEYNTHNGPSTPAKEGDTDRPHRASDGKLRGRSKRSSDPSPAG) is disordered. The segment covering 234–249 (KEGDTDRPHRASDGKL) has biased composition (basic and acidic residues). The active-site Nucleophile is aspartate 274. Mg(2+)-binding residues include aspartate 274, aspartate 276, and aspartate 502. The Proton donor role is filled by aspartate 276.

The protein belongs to the HAD-like hydrolase superfamily. EYA family. Interacts with DACH2 and SIX1, and probably with SIX2, SIX4 and SIX5. Interacts with CAPN8. Interacts with GNAZ and GNAI2; this precludes interaction with SIX1. The cofactor is Mg(2+). Highest expression in muscle with lower levels in kidney, placenta, pancreas, brain and heart.

It localises to the cytoplasm. It is found in the nucleus. The enzyme catalyses O-phospho-L-tyrosyl-[protein] + H2O = L-tyrosyl-[protein] + phosphate. Functions both as protein phosphatase and as transcriptional coactivator for SIX1, and probably also for SIX2, SIX4 and SIX5. Tyrosine phosphatase that dephosphorylates 'Tyr-142' of histone H2AX (H2AXY142ph) and promotes efficient DNA repair via the recruitment of DNA repair complexes containing MDC1. 'Tyr-142' phosphorylation of histone H2AX plays a central role in DNA repair and acts as a mark that distinguishes between apoptotic and repair responses to genotoxic stress. Its function as histone phosphatase may contribute to its function in transcription regulation during organogenesis. Plays an important role in hypaxial muscle development together with SIX1 and DACH2; in this it is functionally redundant with EYA1. This is Protein phosphatase EYA2 (EYA2) from Homo sapiens (Human).